The chain runs to 169 residues: Ribosome maturation factor RimP (169 aa).

Belongs to the RimP family.

The protein resides in the cytoplasm. Required for maturation of 30S ribosomal subunits. The polypeptide is Ribosome maturation factor RimP (Koribacter versatilis (strain Ellin345)).